The sequence spans 429 residues: Cyclin-B2-2 (429 aa).

The tract at residues 66–98 (SQRKQESCDKKKLDSLHPSISRSQEETKKLKPS) is disordered. The segment covering 68-80 (RKQESCDKKKLDS) has biased composition (basic and acidic residues).

It belongs to the cyclin family. Cyclin AB subfamily. Interacts with CDC20-1 and CDC20-2. As to expression, expressed in roots.

In Arabidopsis thaliana (Mouse-ear cress), this protein is Cyclin-B2-2 (CYCB2-2).